We begin with the raw amino-acid sequence, 301 residues long: Large ribosomal subunit protein uL18 (301 aa).

This sequence belongs to the universal ribosomal protein uL18 family. As to quaternary structure, component of the large ribosomal subunit (LSU). Mature N.crassa ribosomes consist of a small (40S) and a large (60S) subunit. The 40S small subunit contains 1 molecule of ribosomal RNA (18S rRNA) and at least 32 different proteins. The large 60S subunit contains 3 rRNA molecules (26S, 5.8S and 5S rRNA) and at least 42 different proteins.

It localises to the cytoplasm. In terms of biological role, component of the ribosome, a large ribonucleoprotein complex responsible for the synthesis of proteins in the cell. The small ribosomal subunit (SSU) binds messenger RNAs (mRNAs) and translates the encoded message by selecting cognate aminoacyl-transfer RNA (tRNA) molecules. The large subunit (LSU) contains the ribosomal catalytic site termed the peptidyl transferase center (PTC), which catalyzes the formation of peptide bonds, thereby polymerizing the amino acids delivered by tRNAs into a polypeptide chain. The nascent polypeptides leave the ribosome through a tunnel in the LSU and interact with protein factors that function in enzymatic processing, targeting, and the membrane insertion of nascent chains at the exit of the ribosomal tunnel. The sequence is that of Large ribosomal subunit protein uL18 (rpl-5) from Neurospora crassa (strain ATCC 24698 / 74-OR23-1A / CBS 708.71 / DSM 1257 / FGSC 987).